An 81-amino-acid polypeptide reads, in one-letter code: ATP synthase subunit c (81 aa).

Transmembrane regions (helical) follow at residues 5–25 (VAAASVIAAALAVGLAAIGPG) and 57–77 (LAFMESLTIYGLVIALVLLFA).

The protein belongs to the ATPase C chain family. F-type ATPases have 2 components, F(1) - the catalytic core - and F(0) - the membrane proton channel. F(1) has five subunits: alpha(3), beta(3), gamma(1), delta(1), epsilon(1). F(0) has four main subunits: a(1), b(1), b'(1) and c(10-14). The alpha and beta chains form an alternating ring which encloses part of the gamma chain. F(1) is attached to F(0) by a central stalk formed by the gamma and epsilon chains, while a peripheral stalk is formed by the delta, b and b' chains.

It localises to the cellular thylakoid membrane. Its function is as follows. F(1)F(0) ATP synthase produces ATP from ADP in the presence of a proton or sodium gradient. F-type ATPases consist of two structural domains, F(1) containing the extramembraneous catalytic core and F(0) containing the membrane proton channel, linked together by a central stalk and a peripheral stalk. During catalysis, ATP synthesis in the catalytic domain of F(1) is coupled via a rotary mechanism of the central stalk subunits to proton translocation. In terms of biological role, key component of the F(0) channel; it plays a direct role in translocation across the membrane. A homomeric c-ring of between 10-14 subunits forms the central stalk rotor element with the F(1) delta and epsilon subunits. The polypeptide is ATP synthase subunit c (Microcystis aeruginosa (strain NIES-843 / IAM M-2473)).